Here is a 431-residue protein sequence, read N- to C-terminus: MNKSYPNHSLENFFSTNLSATDDAVFAGIQAEFTRQNEQIELIASENIVSKAVMQAQGTCLTNKYAEGYPGRRYYGGCEHVDTVEAIAIERAKKLFNCEYANVQPHSGAQANGAVKLALLQPGDTILGMSLDAGGHLTHGARPALSGKWFNAVQYGVDRETLEINYDDVRALALEHKPKMIIAGGSAIPRTIDFAKFREIADEVNAILMVDMAHIAGLIATGAHPSPLPHAHVVTTTTHKTLRGPRGGMILTNHEDIIKKINSAVFPGLQGGPLMHVIAAKAVAFGEALGPEFKTYIDSVINNAKVLAEVLQTRGCDIVTGGTDTHLMLVDLRPKGLKGNKAEEALERAGITCNKNGIPFDTEKPMITSGIRLGTPAGTSRGFGAEEFKLIGNWIGDVLDGLVNNPEGDAIVEKRVRKEVKELCSRFPLYQ.

Residues Leu-131 and 135–137 (GHL) contribute to the (6S)-5,6,7,8-tetrahydrofolate site. Lys-240 carries the N6-(pyridoxal phosphate)lysine modification.

This sequence belongs to the SHMT family. As to quaternary structure, homodimer. Pyridoxal 5'-phosphate serves as cofactor.

It is found in the cytoplasm. The enzyme catalyses (6R)-5,10-methylene-5,6,7,8-tetrahydrofolate + glycine + H2O = (6S)-5,6,7,8-tetrahydrofolate + L-serine. Its pathway is one-carbon metabolism; tetrahydrofolate interconversion. The protein operates within amino-acid biosynthesis; glycine biosynthesis; glycine from L-serine: step 1/1. Catalyzes the reversible interconversion of serine and glycine with tetrahydrofolate (THF) serving as the one-carbon carrier. This reaction serves as the major source of one-carbon groups required for the biosynthesis of purines, thymidylate, methionine, and other important biomolecules. Also exhibits THF-independent aldolase activity toward beta-hydroxyamino acids, producing glycine and aldehydes, via a retro-aldol mechanism. This chain is Serine hydroxymethyltransferase 2, found in Vibrio parahaemolyticus serotype O3:K6 (strain RIMD 2210633).